Consider the following 366-residue polypeptide: Probable neutral protease 2 homolog B (366 aa).

The N-terminal stretch at 1 to 19 (MQVIVALAALSSLAAPALG) is a signal peptide. A propeptide spanning residues 20 to 189 (FSIPRGVPVS…RGPRSRITKR (170 aa)) is cleaved from the precursor. 3 disulfides stabilise this stretch: cysteine 197/cysteine 267, cysteine 274/cysteine 292, and cysteine 306/cysteine 366. Residue histidine 317 coordinates Zn(2+). Glutamate 318 is an active-site residue. The Zn(2+) site is built by histidine 321 and aspartate 332.

The protein belongs to the peptidase M35 family. Zn(2+) serves as cofactor.

The protein resides in the secreted. It carries out the reaction Preferential cleavage of bonds with hydrophobic residues in P1'. Also 3-Asn-|-Gln-4 and 8-Gly-|-Ser-9 bonds in insulin B chain.. Functionally, probable secreted metalloprotease that shows high activities on basic nuclear substrates such as histone and protamine. May be involved in virulence. The chain is Probable neutral protease 2 homolog B (NpII-B) from Trichophyton rubrum (Athlete's foot fungus).